Here is a 436-residue protein sequence, read N- to C-terminus: Trigger factor (436 aa).

The region spanning 163-248 (GDRVTVDFEG…VKKIEAAHLP (86 aa)) is the PPIase FKBP-type domain.

It belongs to the FKBP-type PPIase family. Tig subfamily.

Its subcellular location is the cytoplasm. It carries out the reaction [protein]-peptidylproline (omega=180) = [protein]-peptidylproline (omega=0). Involved in protein export. Acts as a chaperone by maintaining the newly synthesized protein in an open conformation. Functions as a peptidyl-prolyl cis-trans isomerase. The polypeptide is Trigger factor (Acidovorax ebreus (strain TPSY) (Diaphorobacter sp. (strain TPSY))).